Consider the following 414-residue polypeptide: tRNA methyltransferase 10 homolog C (414 aa).

Residues 1–35 constitute a mitochondrion transit peptide; that stretch reads MNVTVRFLRPFARCLVPYTFHRKRSHLYSGVLQRY. Ser79 carries the phosphoserine modification. Residues 133-171 are a coiled coil; that stretch reads GKEKAKKAKQVKKEMKAEAREEAKRARLLETTAEEQQQD. Residues 186–378 form the SAM-dependent MTase TRM10-type domain; the sequence is LGWKGVQAMQ…KFVPRRKHTG (193 aa).

It belongs to the class IV-like SAM-binding methyltransferase superfamily. TRM10 family. Component of mitochondrial ribonuclease P, a complex composed of TRMT10C/MRPP1, HSD17B10/MRPP2 and PRORP/MRPP3. Interacts with HSD17B10/MRPP2; forming the MRPP1-MRPP2 subcomplex of the mitochondrial ribonuclease P complex. Interacts with GRSF1.

It is found in the mitochondrion matrix. It localises to the mitochondrion nucleoid. It catalyses the reaction adenosine(9) in tRNA + S-adenosyl-L-methionine = N(1)-methyladenosine(9) in tRNA + S-adenosyl-L-homocysteine + H(+). The catalysed reaction is guanosine(9) in tRNA + S-adenosyl-L-methionine = N(1)-methylguanosine(9) in tRNA + S-adenosyl-L-homocysteine + H(+). The enzyme catalyses an adenosine in mRNA + S-adenosyl-L-methionine = an N(1)-methyladenosine in mRNA + S-adenosyl-L-homocysteine + H(+). In terms of biological role, mitochondrial tRNA N(1)-methyltransferase involved in mitochondrial tRNA maturation. Component of mitochondrial ribonuclease P, a complex composed of TRMT10C/MRPP1, HSD17B10/MRPP2 and PRORP/MRPP3, which cleaves tRNA molecules in their 5'-ends. Together with HSD17B10/MRPP2, forms a subcomplex of the mitochondrial ribonuclease P, named MRPP1-MRPP2 subcomplex, which displays functions that are independent of the ribonuclease P activity. The MRPP1-MRPP2 subcomplex catalyzes the formation of N(1)-methylguanine and N(1)-methyladenine at position 9 (m1G9 and m1A9, respectively) in tRNAs; TRMT10C/MRPP1 acting as the catalytic N(1)-methyltransferase subunit. The MRPP1-MRPP2 subcomplex also acts as a tRNA maturation platform: following 5'-end cleavage by the mitochondrial ribonuclease P complex, the MRPP1-MRPP2 subcomplex enhances the efficiency of 3'-processing catalyzed by ELAC2, retains the tRNA product after ELAC2 processing and presents the nascent tRNA to the mitochondrial CCA tRNA nucleotidyltransferase TRNT1 enzyme. In addition to tRNA N(1)-methyltransferase activity, TRMT10C/MRPP1 also acts as a mRNA N(1)-methyltransferase by mediating methylation of adenosine residues at the N(1) position of MT-ND5 mRNA. Associates with mitochondrial DNA complexes at the nucleoids to initiate RNA processing and ribosome assembly. The protein is tRNA methyltransferase 10 homolog C of Mus musculus (Mouse).